A 425-amino-acid chain; its full sequence is Enolase (425 aa).

Residue Gln-162 participates in (2R)-2-phosphoglycerate binding. Residue Glu-204 is the Proton donor of the active site. 3 residues coordinate Mg(2+): Asp-241, Glu-288, and Asp-315. Lys-340, Arg-369, Ser-370, and Lys-391 together coordinate (2R)-2-phosphoglycerate. Lys-340 functions as the Proton acceptor in the catalytic mechanism.

The protein belongs to the enolase family. Mg(2+) serves as cofactor.

The protein localises to the cytoplasm. It is found in the secreted. It localises to the cell surface. The catalysed reaction is (2R)-2-phosphoglycerate = phosphoenolpyruvate + H2O. The protein operates within carbohydrate degradation; glycolysis; pyruvate from D-glyceraldehyde 3-phosphate: step 4/5. In terms of biological role, catalyzes the reversible conversion of 2-phosphoglycerate (2-PG) into phosphoenolpyruvate (PEP). It is essential for the degradation of carbohydrates via glycolysis. In Porphyromonas gingivalis (strain ATCC 33277 / DSM 20709 / CIP 103683 / JCM 12257 / NCTC 11834 / 2561), this protein is Enolase.